The chain runs to 228 residues: Cytidylate kinase (228 aa).

An ATP-binding site is contributed by 17–25 (GPTASGKGT).

Belongs to the cytidylate kinase family. Type 1 subfamily.

The protein localises to the cytoplasm. The catalysed reaction is CMP + ATP = CDP + ADP. It carries out the reaction dCMP + ATP = dCDP + ADP. The sequence is that of Cytidylate kinase from Paraburkholderia phymatum (strain DSM 17167 / CIP 108236 / LMG 21445 / STM815) (Burkholderia phymatum).